The chain runs to 609 residues: Forkhead box protein O (609 aa).

Disordered stretches follow at residues 1–89 (MDGF…KNSS) and 181–263 (KSVR…SSCG). Threonine 43 is modified (phosphothreonine; by PKB/AKT1). Over residues 62–79 (TKASNQQLASGDPQQAMQ) the composition is skewed to polar residues. Over residues 80–89 (NANAAKKNSS) the composition is skewed to low complexity. Residues 94-200 (WGNLSYADLI…ETSRYEKRRG (107 aa)) constitute a DNA-binding region (fork-head). Serine 189 is modified (phosphoserine; by PKB/AKT1). Polar residues-rich tracts occupy residues 220–229 (ATPSPSSSVS) and 254–263 (RASSNASSCG). Serine 257 carries the post-translational modification Phosphoserine; by PKB/AKT1. Residues serine 260, serine 261, and serine 266 each carry the phosphoserine modification. 2 disordered regions span residues 321-365 (AASG…QGQG) and 384-411 (RDGLSPNSVTTTMSPAYPNSEPSSDSLN). The segment covering 327-339 (TQPPPPYQPPQQP) has biased composition (pro residues). Residues 388-397 (SPNSVTTTMS) show a composition bias toward polar residues.

As to quaternary structure, interacts with melt.

It localises to the cytoplasm. It is found in the nucleus. Functionally, transcription factor involved in the regulation of the insulin signaling pathway. Consistently activates both the downstream target Thor\d4EBP and the feedback control target InR. Involved in negative regulation of the cell cycle, modulating cell growth and proliferation. In response to cellular stresses, such as nutrient deprivation or increased levels of reactive oxygen species, foxo is activated and inhibits growth through the action of target genes such as Thor. Foxo activated in the adult fat body can regulate lifespan in adults; an insulin peptide itself may function as one secondary messenger of insulin-regulated aging. Also regulates Lip4, homolog of human acid lipases, thereby acting as a key modulator of lipid metabolism by insulin signaling and integrates insulin responses to glucose and lipid homeostasis. The sequence is that of Forkhead box protein O from Drosophila virilis (Fruit fly).